A 521-amino-acid polypeptide reads, in one-letter code: Probable inorganic phosphate transporter 1-3 (521 aa).

At 1 to 24 the chain is on the cytoplasmic side; it reads MADQQLGVLKALDVAKTQLYHFTA. The helical transmembrane segment at 25 to 45 threads the bilayer; sequence IVIAGMGFFTDAYDLFCVSLV. Topologically, residues 46–70 are extracellular; sequence TKLLGRLYYFNPTSAKPGSLPPHVA. Residues 71 to 91 form a helical membrane-spanning segment; sequence AAVNGVALCGTLAGQLFFGWL. The Cytoplasmic portion of the chain corresponds to 92–99; that stretch reads GDKLGRKK. The chain crosses the membrane as a helical span at residues 100–120; that stretch reads VYGITLIMMILCSVASGLSLG. Residues 121–131 are Extracellular-facing; the sequence is NSAKGVMTTLC. The chain crosses the membrane as a helical span at residues 132-152; the sequence is FFRFWLGFGIGGDYPLSATIM. The Cytoplasmic portion of the chain corresponds to 153–161; the sequence is SEYANKKTR. A helical membrane pass occupies residues 162–182; the sequence is GAFIAAVFAMQGVGILAGGFV. Topologically, residues 183–211 are extracellular; it reads ALAVSSIFDKKFPSPTYEQDRFLSTPPQA. A helical membrane pass occupies residues 212–232; the sequence is DYIWRIIVMFGALPAALTYYW. Topologically, residues 233-292 are cytoplasmic; sequence RMKMPETARYTALVAKNIKQATADMSKVLQTDLELEERVEDDVKDPKKNYGLFSKEFLRR. Residues 293–313 form a helical membrane-spanning segment; sequence HGLHLLGTTSTWFLLDIAFYS. Over 314-348 the chain is Extracellular; that stretch reads QNLFQKDIFSAIGWIPKAATMNAIHEVFKIARAQT. A helical membrane pass occupies residues 349–369; the sequence is LIALCSTVPGYWFTVAFIDII. Residues 370–371 are Cytoplasmic-facing; that stretch reads GR. Residues 372 to 392 form a helical membrane-spanning segment; that stretch reads FAIQLMGFFMMTVFMFAIAFP. The Extracellular portion of the chain corresponds to 393-402; it reads YNHWILPDNR. A helical transmembrane segment spans residues 403 to 423; that stretch reads IGFVVMYSLTFFFANFGPNAT. At 424-441 the chain is on the cytoplasmic side; that stretch reads TFIVPAEIFPARLRSTCH. The chain crosses the membrane as a helical span at residues 442–462; it reads GISAATGKAGAIVGAFGFLYA. The Extracellular portion of the chain corresponds to 463–484; sequence AQPQDKTKTDAGYPPGIGVKNS. The helical transmembrane segment at 485–505 threads the bilayer; it reads LIMLGVINFVGMLFTFLVPEP. The Cytoplasmic segment spans residues 506 to 521; the sequence is KGKSLEELSGEAEVDK.

This sequence belongs to the major facilitator superfamily. Phosphate:H(+) symporter (TC 2.A.1.9) family. In terms of tissue distribution, mainly expressed in roots, especially in the stele of the primary root, the pericycle and trichoblasts of secondary roots. To a lower extent, present in hydathodes and vascular tissues of young leaves.

It is found in the membrane. High-affinity transporter for external inorganic phosphate. The polypeptide is Probable inorganic phosphate transporter 1-3 (PHT1-3) (Arabidopsis thaliana (Mouse-ear cress)).